Reading from the N-terminus, the 283-residue chain is 4-diphosphocytidyl-2-C-methyl-D-erythritol kinase (283 aa).

Lys-12 is a catalytic residue. ATP is bound at residue 94 to 104 (PAQAGLGGGSS). The active site involves Asp-136.

This sequence belongs to the GHMP kinase family. IspE subfamily.

It carries out the reaction 4-CDP-2-C-methyl-D-erythritol + ATP = 4-CDP-2-C-methyl-D-erythritol 2-phosphate + ADP + H(+). It participates in isoprenoid biosynthesis; isopentenyl diphosphate biosynthesis via DXP pathway; isopentenyl diphosphate from 1-deoxy-D-xylulose 5-phosphate: step 3/6. Catalyzes the phosphorylation of the position 2 hydroxy group of 4-diphosphocytidyl-2C-methyl-D-erythritol. This is 4-diphosphocytidyl-2-C-methyl-D-erythritol kinase from Acidovorax ebreus (strain TPSY) (Diaphorobacter sp. (strain TPSY)).